The sequence spans 58 residues: Large ribosomal subunit protein uL30 (58 aa).

It belongs to the universal ribosomal protein uL30 family. As to quaternary structure, part of the 50S ribosomal subunit.

This Azotobacter vinelandii (strain DJ / ATCC BAA-1303) protein is Large ribosomal subunit protein uL30.